Consider the following 212-residue polypeptide: MRVALLGGTGNLGKGLALRLATLGHEIVVGSRREEKAEAKAAEYRRIAGDASITGMKNEDAAEACDIAVLTIPWEHAIDTARDLKNILREKIVVSPLVPVSRGAKGFTYSSERSAAEIVAEVLESEKVVSALHTIPAARFANLDEKFDWDVPVCGDDDESKKVVMSLISEIDGLRPLDAGPLSNSRLVESLTPLILNIMRFNGMGELGIKFL.

NADP(+) is bound by residues 9–12, 31–32, lysine 36, isoleucine 72, histidine 76, valine 98, and alanine 137; these read TGNL and SR. Leucine 207 contacts coenzyme F420-(gamma-Glu)n.

Belongs to the F420-dependent NADP reductase family. In terms of assembly, homodimer.

It carries out the reaction reduced coenzyme F420-(gamma-L-Glu)(n) + NADP(+) = oxidized coenzyme F420-(gamma-L-Glu)(n) + NADPH + 2 H(+). Functionally, catalyzes the reversible reduction of NADP(+) by F420H(2). In this reaction the proS hydrogen at C5 of F420 is transferred into the proS position at C4 of NADPH. In Archaeoglobus fulgidus (strain ATCC 49558 / DSM 4304 / JCM 9628 / NBRC 100126 / VC-16), this protein is F420-dependent NADP reductase (fno).